The following is a 116-amino-acid chain: FK506-binding protein 1 (116 aa).

The PPIase FKBP-type domain maps to 19–116 (GDKVSIHYTG…IFEVELLKIN (98 aa)).

This sequence belongs to the FKBP-type PPIase family. FKBP1 subfamily.

It is found in the cytoplasm. The catalysed reaction is [protein]-peptidylproline (omega=180) = [protein]-peptidylproline (omega=0). Inhibited by both FK506 and rapamycin. In terms of biological role, PPIases accelerate the folding of proteins. It catalyzes the cis-trans isomerization of proline imidic peptide bonds in oligopeptides. This Aspergillus oryzae (strain ATCC 42149 / RIB 40) (Yellow koji mold) protein is FK506-binding protein 1 (fpr1).